The primary structure comprises 314 residues: Phosphoribosylaminoimidazole-succinocarboxamide synthase (314 aa).

It belongs to the SAICAR synthetase family.

The catalysed reaction is 5-amino-1-(5-phospho-D-ribosyl)imidazole-4-carboxylate + L-aspartate + ATP = (2S)-2-[5-amino-1-(5-phospho-beta-D-ribosyl)imidazole-4-carboxamido]succinate + ADP + phosphate + 2 H(+). It functions in the pathway purine metabolism; IMP biosynthesis via de novo pathway; 5-amino-1-(5-phospho-D-ribosyl)imidazole-4-carboxamide from 5-amino-1-(5-phospho-D-ribosyl)imidazole-4-carboxylate: step 1/2. This Bacteroides fragilis (strain ATCC 25285 / DSM 2151 / CCUG 4856 / JCM 11019 / LMG 10263 / NCTC 9343 / Onslow / VPI 2553 / EN-2) protein is Phosphoribosylaminoimidazole-succinocarboxamide synthase.